The following is a 63-amino-acid chain: Acrosin inhibitor 1 (63 aa).

A Kazal-like domain is found at 8-63; that stretch reads FGFPPDCKVYTEACTREYNPICDSAAKTYSNECTFCNEKMNNDADIHFNHFGECEY. 3 cysteine pairs are disulfide-bonded: C14/C43, C21/C40, and C29/C61.

In terms of tissue distribution, seminal plasma.

The protein resides in the secreted. Strong inhibitor of acrosin. This is Acrosin inhibitor 1 from Bos taurus (Bovine).